Consider the following 388-residue polypeptide: Protein YnjB (388 aa).

Residues 333 to 357 (AVWGDPSVLDPQKLPDGQRESLQSR) form a disordered region.

This chain is Protein YnjB (ynjB), found in Escherichia coli (strain K12).